The chain runs to 124 residues: Non-structural protein 2 (124 aa).

The short motif at D121 to P124 is the DLNP; interaction with MAP1B element.

This sequence belongs to the pneumovirus non-structural protein 2 family. In terms of assembly, monomer (instable). Homomultimer. Heteromultimer with NS1. Interacts with host RIGI (via N-terminus); this interaction prevents host signaling pathway involved in interferon production. Interacts with host MAP1B/microtubule-associated protein 1B.

The protein resides in the host mitochondrion. Functionally, plays a major role in antagonizing the type I IFN-mediated antiviral response. Acts cooperatively with NS1 to repress activation and nuclear translocation of host IFN-regulatory factor IRF3. Interacts with the host cytoplasmic sensor of viral nucleic acids RIGI and prevents the interaction with its downstream partner MAVS. Together with NS2, participates in the proteasomal degradation of host STAT2, IRF3, IRF7, TBK1 and RIGI through a NS-degradasome involving CUL2 and Elongin-C. The degradasome requires an intact mitochondrial MAVS. Induces host SOCS1 expression. Induces activation of NF-kappa-B. Suppresses premature apoptosis by an NF-kappa-B-dependent, interferon-independent mechanism promoting continued viral replication. The sequence is that of Non-structural protein 2 (1B) from Homo sapiens (Human).